The following is a 467-amino-acid chain: Light-independent protochlorophyllide reductase subunit N (467 aa).

[4Fe-4S] cluster contacts are provided by Cys-24, Cys-49, and Cys-109.

It belongs to the BchN/ChlN family. In terms of assembly, protochlorophyllide reductase is composed of three subunits; ChlL, ChlN and ChlB. Forms a heterotetramer of two ChlB and two ChlN subunits. [4Fe-4S] cluster is required as a cofactor.

The catalysed reaction is chlorophyllide a + oxidized 2[4Fe-4S]-[ferredoxin] + 2 ADP + 2 phosphate = protochlorophyllide a + reduced 2[4Fe-4S]-[ferredoxin] + 2 ATP + 2 H2O. Its pathway is porphyrin-containing compound metabolism; chlorophyll biosynthesis (light-independent). Component of the dark-operative protochlorophyllide reductase (DPOR) that uses Mg-ATP and reduced ferredoxin to reduce ring D of protochlorophyllide (Pchlide) to form chlorophyllide a (Chlide). This reaction is light-independent. The NB-protein (ChlN-ChlB) is the catalytic component of the complex. This chain is Light-independent protochlorophyllide reductase subunit N, found in Leptolyngbya boryana (Plectonema boryanum).